A 135-amino-acid polypeptide reads, in one-letter code: HVA22-like protein d (135 aa).

The next 3 helical transmembrane spans lie at L11 to A31, Q42 to S62, and L63 to L83.

The protein belongs to the DP1 family. As to expression, predominantly expressed in flower buds.

Its subcellular location is the membrane. The protein is HVA22-like protein d (HVA22D) of Arabidopsis thaliana (Mouse-ear cress).